A 1375-amino-acid polypeptide reads, in one-letter code: DNA-directed RNA polymerase subunit beta (1375 aa).

The protein belongs to the RNA polymerase beta chain family. As to quaternary structure, the RNAP catalytic core consists of 2 alpha, 1 beta, 1 beta' and 1 omega subunit. When a sigma factor is associated with the core the holoenzyme is formed, which can initiate transcription.

The catalysed reaction is RNA(n) + a ribonucleoside 5'-triphosphate = RNA(n+1) + diphosphate. Its function is as follows. DNA-dependent RNA polymerase catalyzes the transcription of DNA into RNA using the four ribonucleoside triphosphates as substrates. In Coxiella burnetii (strain CbuG_Q212) (Coxiella burnetii (strain Q212)), this protein is DNA-directed RNA polymerase subunit beta.